We begin with the raw amino-acid sequence, 483 residues long: Cobyric acid synthase (483 aa).

In terms of domain architecture, GATase cobBQ-type spans 251–438 (ALIVAVPMLP…LHGVFSADRF (188 aa)). The Nucleophile role is filled by cysteine 333. Residue histidine 430 is part of the active site.

This sequence belongs to the CobB/CobQ family. CobQ subfamily.

Its pathway is cofactor biosynthesis; adenosylcobalamin biosynthesis. Catalyzes amidations at positions B, D, E, and G on adenosylcobyrinic A,C-diamide. NH(2) groups are provided by glutamine, and one molecule of ATP is hydrogenolyzed for each amidation. The sequence is that of Cobyric acid synthase from Brucella canis (strain ATCC 23365 / NCTC 10854 / RM-666).